The chain runs to 275 residues: Lectin (275 aa).

Positions 1–30 are cleaved as a signal peptide; it reads MASLQTQMISFYLIFLSILLTTIFFFKVNS. D-glucose is bound by residues D111 and G129. E149 and D151 together coordinate Mn(2+). Ca(2+) contacts are provided by D151, F153, N155, and D159. The Mn(2+) site is built by D159 and H166. A propeptide spanning residues 211–217 is cleaved from the precursor; it reads NSLEEEN. Residues G246 and A247 each contribute to the D-glucose site. Positions 270 to 275 are excised as a propeptide; it reads KQAADA.

Belongs to the leguminous lectin family. In terms of assembly, heterotetramer of two alpha and two beta chains. Post-translationally, the mature form consists of two chains, alpha and beta, produced by cleavage of the immature protein. These remain cleaved, yet fold together to form one subunit.

Its function is as follows. D-mannose specific lectin. This is Lectin from Lens culinaris subsp. tomentosus (Lentil).